The following is a 184-amino-acid chain: Zinc metalloproteinase-disintegrin-like ammodytagin (184 aa).

The Peptidase M12B domain occupies 1-90; it reads KSAAXVTLDL…CPAKCIDNKP (90 aa). D20 lines the Ca(2+) pocket. Position 64 (H64) interacts with Zn(2+). Residue E65 is part of the active site. Zn(2+) is bound by residues H68 and H74. N88, V100, N103, F105, and E107 together coordinate Ca(2+). The 27-residue stretch at 98 to 124 folds into the Disintegrin domain; it reads PAVCGNYFVELTPGSQCADGVCCDQCR. 2 cysteine pairs are disulfide-bonded: C114–C120 and C165–C177.

Belongs to the venom metalloproteinase (M12B) family. P-III subfamily. P-IIIc sub-subfamily. Heterodimer; disulfide-linked. Zn(2+) is required as a cofactor. The N-terminus is blocked. Post-translationally, N-glycosylated. In terms of tissue distribution, expressed by the venom gland.

It localises to the secreted. Inhibited by EDTA, DTT and zinc ions. Partially inhibited by L-cysteine. Not inhibited by 2-propanol or PMSF. Activity is enhanced by calcium or magnesium ions. Functionally, snake venom zinc metalloprotease that has fibrinogenolytic and hemorrhagic activities in mouse and rats. Hydrolyzes the Aalpha-chain (FGA) and more slowly the Bbeta-chain of fibrinogen (FGB), without affecting the gamma-chain. Its hemorrhagic activity results of its involvement in cleavage of basal membrane components (nidogen and fibronectin but not laminin) and depletion of fibrinogen, prothrombin (F2) and factor X (F10) in blood circulation. Also possess potent azocaseinolytic activity and cleaves insulin B-chain, hydrolyzing it at positions Gln(4)-His(5), His(10)-Leu(11) and Tyr(16)-Leu(17). In Vipera ammodytes ammodytes (Western sand viper), this protein is Zinc metalloproteinase-disintegrin-like ammodytagin.